Consider the following 379-residue polypeptide: RIB43A-like with coiled-coils protein 1 (379 aa).

The tract at residues 1–21 is disordered; the sequence is MYNIKQSTDTKEAAAIEARRN. Residues 8–21 are compositionally biased toward basic and acidic residues; it reads TDTKEAAAIEARRN. Coiled coils occupy residues 82-111 and 216-304; these read KEEA…GREF and NANK…QAEK.

The protein belongs to the RIB43A family. In terms of assembly, microtubule inner protein component of sperm flagellar doublet microtubules.

Its subcellular location is the cytoplasm. It is found in the cytoskeleton. The protein localises to the flagellum axoneme. This chain is RIB43A-like with coiled-coils protein 1 (RIBC1), found in Homo sapiens (Human).